Consider the following 91-residue polypeptide: Alpha-defensin-related sequence 10 (91 aa).

A signal peptide spans 1–19; sequence MKKLVLLSAFVLLAFQVQA. The propeptide occupies 20–65; sequence DSIQNTDEETKTEEQPGEENQAMSVSFGDPEGSALQDAAVGMARPC. The interval 21-52 is disordered; it reads SIQNTDEETKTEEQPGEENQAMSVSFGDPEGS. 7 repeat units span residues 65–67, 68–70, 71–73, 74–76, 77–79, 80–82, and 83–85. The 7 X 3 AA tandem repeats of C-P-X stretch occupies residues 65-85; the sequence is CPPCPSCPSCPWCPMCPRCPS.

Belongs to the alpha-defensin family. As to expression, paneth cells of the small bowel.

The protein resides in the secreted. In terms of biological role, apparent precursor of a secreted, cationic, proline- and cysteine-rich peptide that contains Cys-Pro-Xaa repeats. Unlike cryptdin, the proposed mature peptide region lacks the structural motif characteristic of defensins. It may have microbicidal activities. This is Alpha-defensin-related sequence 10 (Defa-rs10) from Mus musculus (Mouse).